A 217-amino-acid chain; its full sequence is MALKLDVKAPGGKVEGSIELPAELFDAPANIALMHQVVTAQRAAARQGTHSTKTRGDVSGGGRKPYRQKGTGRARQGSTRAPQFTGGGVVHGPKPRDYSQRTPKKMIAAALRGALSDRARNGRIHAITELVSGQTPSTKSAKAFLGALTERKQVLVVIGRSDEAGAKSVRNLPGVHILAPDQLNTYDVLRADDVVFSVEALRAYIAANTGTPEEVSA.

Residues 42-100 form a disordered region; that stretch reads RAAARQGTHSTKTRGDVSGGGRKPYRQKGTGRARQGSTRAPQFTGGGVVHGPKPRDYSQ.

Belongs to the universal ribosomal protein uL4 family. As to quaternary structure, part of the 50S ribosomal subunit.

Its function is as follows. One of the primary rRNA binding proteins, this protein initially binds near the 5'-end of the 23S rRNA. It is important during the early stages of 50S assembly. It makes multiple contacts with different domains of the 23S rRNA in the assembled 50S subunit and ribosome. Forms part of the polypeptide exit tunnel. This is Large ribosomal subunit protein uL4 from Mycolicibacterium paratuberculosis (strain ATCC BAA-968 / K-10) (Mycobacterium paratuberculosis).